A 235-amino-acid chain; its full sequence is Cytidylate kinase (235 aa).

Position 11–19 (11–19 (GPSGVGKST)) interacts with ATP.

The protein belongs to the cytidylate kinase family. Type 1 subfamily.

The protein localises to the cytoplasm. The catalysed reaction is CMP + ATP = CDP + ADP. It carries out the reaction dCMP + ATP = dCDP + ADP. The polypeptide is Cytidylate kinase (Syntrophotalea carbinolica (strain DSM 2380 / NBRC 103641 / GraBd1) (Pelobacter carbinolicus)).